Consider the following 268-residue polypeptide: Undecaprenyl-diphosphatase (268 aa).

A run of 7 helical transmembrane segments spans residues 47-67 (FAVL…FAKL), 83-103 (FVIG…VAGS), 109-129 (LFNP…LLWV), 144-164 (FPLP…IPGV), 184-204 (AAEF…VYDF), 218-238 (IVAI…KTFL), and 246-266 (FELF…ALAM).

Belongs to the UppP family.

Its subcellular location is the cell inner membrane. It carries out the reaction di-trans,octa-cis-undecaprenyl diphosphate + H2O = di-trans,octa-cis-undecaprenyl phosphate + phosphate + H(+). Catalyzes the dephosphorylation of undecaprenyl diphosphate (UPP). Confers resistance to bacitracin. In Rhodopseudomonas palustris (strain BisB5), this protein is Undecaprenyl-diphosphatase.